Consider the following 293-residue polypeptide: Ribosomal protein L11 methyltransferase (293 aa).

S-adenosyl-L-methionine is bound by residues threonine 145, glycine 166, aspartate 188, and asparagine 230.

It belongs to the methyltransferase superfamily. PrmA family.

The protein localises to the cytoplasm. The enzyme catalyses L-lysyl-[protein] + 3 S-adenosyl-L-methionine = N(6),N(6),N(6)-trimethyl-L-lysyl-[protein] + 3 S-adenosyl-L-homocysteine + 3 H(+). Methylates ribosomal protein L11. The sequence is that of Ribosomal protein L11 methyltransferase from Shewanella sp. (strain ANA-3).